The sequence spans 203 residues: Peptidyl-prolyl cis-trans isomerase FKBP11 (203 aa).

Residues 1-29 form the signal peptide; the sequence is MTLRPSLLPLRLLLLLLLLLRGAVCQAEA. The region spanning 59 to 146 is the PPIase FKBP-type domain; that stretch reads GDTLHIHYSG…HFDVELIALI (88 aa). Residues 158 to 178 traverse the membrane as a helical segment; that stretch reads ILPLVGMAMVPALLGLIGYHL.

The protein belongs to the FKBP-type PPIase family. Interacts with IFITM5.

It is found in the membrane. It catalyses the reaction [protein]-peptidylproline (omega=180) = [protein]-peptidylproline (omega=0). Its function is as follows. PPIases accelerate the folding of proteins during protein synthesis. This Bos taurus (Bovine) protein is Peptidyl-prolyl cis-trans isomerase FKBP11 (FKBP11).